The primary structure comprises 392 residues: Tryptophan synthase beta chain (392 aa).

K84 bears the N6-(pyridoxal phosphate)lysine mark.

This sequence belongs to the TrpB family. As to quaternary structure, tetramer of two alpha and two beta chains. It depends on pyridoxal 5'-phosphate as a cofactor.

The catalysed reaction is (1S,2R)-1-C-(indol-3-yl)glycerol 3-phosphate + L-serine = D-glyceraldehyde 3-phosphate + L-tryptophan + H2O. It functions in the pathway amino-acid biosynthesis; L-tryptophan biosynthesis; L-tryptophan from chorismate: step 5/5. Functionally, the beta subunit is responsible for the synthesis of L-tryptophan from indole and L-serine. The polypeptide is Tryptophan synthase beta chain (Campylobacter jejuni subsp. jejuni serotype O:6 (strain 81116 / NCTC 11828)).